Consider the following 648-residue polypeptide: Transcriptional regulator ManR (648 aa).

PRD domains lie at K187–Q292 and L297–S404. A phosphohistidine; by HPr mark is found at H222, H281, H334, and H393. One can recognise a PTS EIIB type-2 domain in the interval K409 to R500. C415 carries the phosphocysteine; by EIIA modification. Positions N510–Y648 constitute a PTS EIIA type-2 domain. At H570 the chain carries Phosphohistidine; by EIIB.

The protein belongs to the transcriptional antiterminator BglG family.

It carries out the reaction D-mannose(out) + N(pros)-phospho-L-histidyl-[protein] = D-mannose 6-phosphate(in) + L-histidyl-[protein]. Its activity is regulated as follows. The regulatory activity of ManR is modulated by phosphorylation and dephosphorylation of the various ManR domains. It becomes activated via phosphoryl group transfer from PEP, EI and HPr on the two conserved histidine residues in the PRD 2 domain, whereas phosphorylation of the EIIA-like domain on His-570 by the PTS EIIB-Man domain of ManP inactivates ManR. In terms of biological role, positively regulates the expression of the mannose operon that consists of three genes, manP, manA, and yjdF, which are responsible for the transport and utilization of mannose. Also activates its own expression. This Bacillus subtilis (strain 168) protein is Transcriptional regulator ManR (manR).